A 341-amino-acid chain; its full sequence is uncharacterized protein (341 aa).

Residues 315 to 337 (VAAWFSGIAGGTFLALKLVSLMM) form a helical membrane-spanning segment.

It localises to the cell membrane. This is an uncharacterized protein from Bacillus subtilis (strain 168).